A 62-amino-acid chain; its full sequence is Large ribosomal subunit protein uL29 (62 aa).

It belongs to the universal ribosomal protein uL29 family.

This is Large ribosomal subunit protein uL29 from Oleidesulfovibrio alaskensis (strain ATCC BAA-1058 / DSM 17464 / G20) (Desulfovibrio alaskensis).